The sequence spans 268 residues: Uronate dehydrogenase (268 aa).

NAD(+)-binding positions include 17–18 (GL), 37–39 (DIS), 55–56 (DL), and 75–79 (FGGVS). Substrate-binding positions include S79 and 115–117 (SNH). Residue Y140 is the Proton acceptor of the active site. K144 contacts NAD(+). S169 is a substrate binding site. Residue S170 coordinates NAD(+). Substrate is bound at residue R178.

Belongs to the NAD(P)-dependent epimerase/dehydratase family. Homohexamer.

The catalysed reaction is beta-D-galacturonate + NAD(+) = D-galactaro-1,5-lactone + NADH + H(+). The enzyme catalyses beta-D-glucuronate + NAD(+) = D-glucaro-1,5-lactone + NADH + H(+). It participates in carbohydrate acid metabolism; D-galacturonate degradation via prokaryotic oxidative pathway. Catalyzes the oxidation of beta-D-galacturonate and beta-D-glucuronate to galactarate and D-glucarate, respectively. The polypeptide is Uronate dehydrogenase (udh) (Pseudomonas putida (strain ATCC 47054 / DSM 6125 / CFBP 8728 / NCIMB 11950 / KT2440)).